The following is a 133-amino-acid chain: Small ribosomal subunit protein uS8 (133 aa).

It belongs to the universal ribosomal protein uS8 family. Part of the 30S ribosomal subunit. Contacts proteins S5 and S12.

Functionally, one of the primary rRNA binding proteins, it binds directly to 16S rRNA central domain where it helps coordinate assembly of the platform of the 30S subunit. This is Small ribosomal subunit protein uS8 from Synechococcus sp. (strain WH7803).